The chain runs to 302 residues: Small ribosomal subunit biogenesis GTPase RsgA (302 aa).

One can recognise a CP-type G domain in the interval 75–233; it reads KNELIRPAVS…IMDTPGFSSM (159 aa). Residues 124–127 and 175–183 contribute to the GTP site; these read NKKD and GPSGVGKSS. Positions 257, 262, 264, and 270 each coordinate Zn(2+).

This sequence belongs to the TRAFAC class YlqF/YawG GTPase family. RsgA subfamily. As to quaternary structure, monomer. Associates with 30S ribosomal subunit, binds 16S rRNA. Zn(2+) serves as cofactor.

It localises to the cytoplasm. Functionally, one of several proteins that assist in the late maturation steps of the functional core of the 30S ribosomal subunit. Helps release RbfA from mature subunits. May play a role in the assembly of ribosomal proteins into the subunit. Circularly permuted GTPase that catalyzes slow GTP hydrolysis, GTPase activity is stimulated by the 30S ribosomal subunit. In Agathobacter rectalis (strain ATCC 33656 / DSM 3377 / JCM 17463 / KCTC 5835 / VPI 0990) (Eubacterium rectale), this protein is Small ribosomal subunit biogenesis GTPase RsgA.